We begin with the raw amino-acid sequence, 77 residues long: U8-lycotoxin-Ls1t (77 aa).

Residues 1 to 20 form the signal peptide; that stretch reads MKLIIFTGLVPFAIVSLIEA. Residues 21–26 constitute a propeptide that is removed on maturation; it reads QAENEK.

It belongs to the neurotoxin 19 (CSTX) family. 08 (U8-Lctx) subfamily. In terms of processing, contains 4 disulfide bonds. In terms of tissue distribution, expressed by the venom gland.

It localises to the secreted. The sequence is that of U8-lycotoxin-Ls1t from Lycosa singoriensis (Wolf spider).